The following is a 677-amino-acid chain: Nuclear fusion protein FUS2 (677 aa).

The residue at position 20 (T20) is a Phosphothreonine. Phosphoserine occurs at positions 67, 72, and 84. T88 bears the Phosphothreonine mark. S100 and S106 each carry phosphoserine. One can recognise a DH domain in the interval 112–326 (KFYKIVQEFY…KYSLFSNKLE (215 aa)).

The protein resides in the cell tip. Promotes cell fusion during zygote formation. The protein is Nuclear fusion protein FUS2 (FUS2) of Saccharomyces cerevisiae (strain ATCC 204508 / S288c) (Baker's yeast).